A 206-amino-acid polypeptide reads, in one-letter code: LOB domain-containing protein 2 (206 aa).

The segment at 1–20 (MMQRNSNNTSITSNISNNSS) is disordered. An LOB domain is found at 23–123 (QACASCKHQR…KSLVHNQPLI (101 aa)).

The protein belongs to the LOB domain-containing protein family.

In Arabidopsis thaliana (Mouse-ear cress), this protein is LOB domain-containing protein 2 (LBD2).